The primary structure comprises 429 residues: Enolase 2 (429 aa).

(2R)-2-phosphoglycerate is bound at residue Gln163. Glu205 acts as the Proton donor in catalysis. Residues Asp242, Glu286, and Asp313 each coordinate Mg(2+). 4 residues coordinate (2R)-2-phosphoglycerate: Lys338, Arg367, Ser368, and Lys389. The active-site Proton acceptor is the Lys338.

The protein belongs to the enolase family. It depends on Mg(2+) as a cofactor.

The protein localises to the cytoplasm. Its subcellular location is the secreted. The protein resides in the cell surface. The enzyme catalyses (2R)-2-phosphoglycerate = phosphoenolpyruvate + H2O. It participates in carbohydrate degradation; glycolysis; pyruvate from D-glyceraldehyde 3-phosphate: step 4/5. Its function is as follows. Catalyzes the reversible conversion of 2-phosphoglycerate (2-PG) into phosphoenolpyruvate (PEP). It is essential for the degradation of carbohydrates via glycolysis. In Lactiplantibacillus plantarum (strain ATCC BAA-793 / NCIMB 8826 / WCFS1) (Lactobacillus plantarum), this protein is Enolase 2.